A 324-amino-acid chain; its full sequence is o-succinylbenzoate synthase (324 aa).

The active-site Proton donor is lysine 135. Positions 163, 192, and 215 each coordinate Mg(2+). Lysine 237 (proton acceptor) is an active-site residue.

This sequence belongs to the mandelate racemase/muconate lactonizing enzyme family. MenC type 1 subfamily. It depends on a divalent metal cation as a cofactor.

It catalyses the reaction (1R,6R)-6-hydroxy-2-succinyl-cyclohexa-2,4-diene-1-carboxylate = 2-succinylbenzoate + H2O. It functions in the pathway quinol/quinone metabolism; 1,4-dihydroxy-2-naphthoate biosynthesis; 1,4-dihydroxy-2-naphthoate from chorismate: step 4/7. Its pathway is quinol/quinone metabolism; menaquinone biosynthesis. In terms of biological role, converts 2-succinyl-6-hydroxy-2,4-cyclohexadiene-1-carboxylate (SHCHC) to 2-succinylbenzoate (OSB). The chain is o-succinylbenzoate synthase from Aliivibrio salmonicida (strain LFI1238) (Vibrio salmonicida (strain LFI1238)).